Here is a 462-residue protein sequence, read N- to C-terminus: Myrosinase-binding protein 1 (462 aa).

The segment at 1–23 (MSTGGPQKLEAQGGKEGKEWDDG) is disordered. Jacalin-type lectin domains follow at residues 6 to 148 (PQKL…YFAP), 157 to 300 (PNKV…YFAP), and 310 to 453 (TKKL…HIVP). Basic and acidic residues predominate over residues 13–23 (GGKEGKEWDDG).

It belongs to the jacalin lectin family. In terms of tissue distribution, expressed exclusively in flowers, in male and female organs, petals and pedicels. Not detected in pollen grains or sepals.

This is Myrosinase-binding protein 1 (MBP1) from Arabidopsis thaliana (Mouse-ear cress).